The sequence spans 473 residues: MVARTPQKQRKVAMVVPPLNSDLLKETINKVDKCMERLQELQYTIAGGTKVVSGVNLSPRSTRIYLKTSLRCKQETLRIKNATNKKSPVGKFPASSPGDWRKMSLPAMLLGETVNEILQASQVTRDIVDAIAPKKSRKSRRLTMSQEDDGPKTPETQQKSREQNPETVSSNIKARRKKEKQNRRSESDSPPSLQRARSRIAFRTISPQVKGNNGENSFRHLANRVSPKHKPWVKKAVLFPNPLFISGTATQQAKFSRTMSPVIARNEISSIKNNKETPYKFLIKSPPTSASKFQVKIRSPPKVLVSPTRNGSNSVRKSPRGSRSPTRTVNLGKKSASISPIRNTGKRSPKLSTAAKLRRSFTPTRNGSNLARKSSISPKRVTLQAFLSPTRNGNFCKKSPKASISPTRVCNKSQKLSTAAKFRRSFSPSRLAMRFVSPMKSRKSVAKCDDHEMVSGLKQRPVLVPKRFSIRRI.

Residues methionine 1–alanine 132 form a required for binding to TAN and location to the cortical division sites (CDS) during cytokinesis region. Disordered regions lie at residues isoleucine 131 to phenylalanine 218 and alanine 290 to alanine 354. 2 stretches are compositionally biased toward polar residues: residues isoleucine 205–asparagine 216 and proline 307–valine 329.

As to quaternary structure, interacts with POK1. Strongly expressed in flower buds and root tips.

The protein resides in the nucleus. The protein localises to the nucleolus. It is found in the cytoplasm. Its subcellular location is the cytoskeleton. It localises to the phragmoplast. Its function is as follows. Is required for spatial control cell division during plant development. Through an association with microtubules, acts both for the positioning of cytoskeletal arrays that establish planes of cell division during prophase and for spatial guidance of expanding phragmoplasts toward preestablished cortical division sites (CDS) during cytokinesis. This is Microtubule-binding protein TANGLED (TAN) from Arabidopsis thaliana (Mouse-ear cress).